The sequence spans 316 residues: 4-hydroxy-3-methylbut-2-enyl diphosphate reductase (316 aa).

[4Fe-4S] cluster is bound at residue Cys12. (2E)-4-hydroxy-3-methylbut-2-enyl diphosphate-binding residues include His41 and His74. Residues His41 and His74 each coordinate dimethylallyl diphosphate. Isopentenyl diphosphate-binding residues include His41 and His74. [4Fe-4S] cluster is bound at residue Cys96. His124 serves as a coordination point for (2E)-4-hydroxy-3-methylbut-2-enyl diphosphate. A dimethylallyl diphosphate-binding site is contributed by His124. His124 lines the isopentenyl diphosphate pocket. The active-site Proton donor is the Glu126. (2E)-4-hydroxy-3-methylbut-2-enyl diphosphate is bound at residue Thr169. Residue Cys199 coordinates [4Fe-4S] cluster. (2E)-4-hydroxy-3-methylbut-2-enyl diphosphate is bound by residues Ser227, Ser228, Asn229, and Ser271. The dimethylallyl diphosphate site is built by Ser227, Ser228, Asn229, and Ser271. Isopentenyl diphosphate-binding residues include Ser227, Ser228, Asn229, and Ser271.

It belongs to the IspH family. [4Fe-4S] cluster serves as cofactor.

It carries out the reaction isopentenyl diphosphate + 2 oxidized [2Fe-2S]-[ferredoxin] + H2O = (2E)-4-hydroxy-3-methylbut-2-enyl diphosphate + 2 reduced [2Fe-2S]-[ferredoxin] + 2 H(+). The enzyme catalyses dimethylallyl diphosphate + 2 oxidized [2Fe-2S]-[ferredoxin] + H2O = (2E)-4-hydroxy-3-methylbut-2-enyl diphosphate + 2 reduced [2Fe-2S]-[ferredoxin] + 2 H(+). It functions in the pathway isoprenoid biosynthesis; dimethylallyl diphosphate biosynthesis; dimethylallyl diphosphate from (2E)-4-hydroxy-3-methylbutenyl diphosphate: step 1/1. It participates in isoprenoid biosynthesis; isopentenyl diphosphate biosynthesis via DXP pathway; isopentenyl diphosphate from 1-deoxy-D-xylulose 5-phosphate: step 6/6. Its function is as follows. Catalyzes the conversion of 1-hydroxy-2-methyl-2-(E)-butenyl 4-diphosphate (HMBPP) into a mixture of isopentenyl diphosphate (IPP) and dimethylallyl diphosphate (DMAPP). Acts in the terminal step of the DOXP/MEP pathway for isoprenoid precursor biosynthesis. The sequence is that of 4-hydroxy-3-methylbut-2-enyl diphosphate reductase from Xanthomonas campestris pv. campestris (strain 8004).